A 222-amino-acid polypeptide reads, in one-letter code: GTP cyclohydrolase 1 (222 aa).

Residues cysteine 111, histidine 114, and cysteine 182 each coordinate Zn(2+).

It belongs to the GTP cyclohydrolase I family. Toroid-shaped homodecamer, composed of two pentamers of five dimers.

It catalyses the reaction GTP + H2O = 7,8-dihydroneopterin 3'-triphosphate + formate + H(+). The protein operates within cofactor biosynthesis; 7,8-dihydroneopterin triphosphate biosynthesis; 7,8-dihydroneopterin triphosphate from GTP: step 1/1. The chain is GTP cyclohydrolase 1 from Enterobacter sp. (strain 638).